The following is a 76-amino-acid chain: Toxin Acra III-1 (76 aa).

In terms of domain architecture, LCN-type CS-alpha/beta spans 4 to 67 (PGNYPLDTRG…IWDAVKNHCT (64 aa)). Disulfide bonds link C18-C41, C27-C46, and C31-C48.

The protein belongs to the long (3 C-C) scorpion toxin superfamily. Sodium channel inhibitor family. Beta subfamily. As to expression, expressed by the venom gland.

The protein localises to the secreted. Its function is as follows. Binds to sodium channels (Nav) and affects the channel activation process. The chain is Toxin Acra III-1 from Androctonus crassicauda (Arabian fat-tailed scorpion).